The chain runs to 1087 residues: DNA polymerase II large subunit (1087 aa).

This sequence belongs to the archaeal DNA polymerase II family. Heterodimer of a large subunit and a small subunit.

It catalyses the reaction DNA(n) + a 2'-deoxyribonucleoside 5'-triphosphate = DNA(n+1) + diphosphate. It carries out the reaction Exonucleolytic cleavage in the 3'- to 5'-direction to yield nucleoside 5'-phosphates.. In terms of biological role, possesses two activities: a DNA synthesis (polymerase) and an exonucleolytic activity that degrades single-stranded DNA in the 3'- to 5'-direction. Has a template-primer preference which is characteristic of a replicative DNA polymerase. The chain is DNA polymerase II large subunit (polC) from Thermoplasma acidophilum (strain ATCC 25905 / DSM 1728 / JCM 9062 / NBRC 15155 / AMRC-C165).